The chain runs to 870 residues: MADHTPMMRQYLEIKSGYPDAVLFFRMGDFYEMFLDDALLASRILDITLTSRNKGSGDEIPFCGVPYHSVTPYITKLIENGHKVAICEQVEDPKQTKGIVRREVVRVITPGLLIETENLSPDDNNYLLALHQGAEEQWGVAWLDLSTGEFRVTELAGPGSALAEAVCINPAEVLLADGVRLEEFPADLKEYLAQKIVSRAPAWVYERDYTSSLICDQFGAASPDVLGLEGLPSGLLAAGAALYYLRENRKSAIPHIRDIRVYQRSEHLALDPATRRNLEITASMAEGKKSGSLLGCLDRTVTAMGARRLKQWLGYPLVGLEPIRSRLDAVEELLEGATTRDELAAQMKGIADLERLNGRIGMASASGRDLRALHDSLQRIPPLRELMATMQTALLCQLTKEIDPLEDILDLVGRGIVENPPFSLREGGIIAPGYNPELDELRSISHEGKGFIARLEAQERARTGISSLKIRFNKVFGYSIEITKSNLASVPADYIRRQTLANAERYITEELKNYEEKVLGAEDRIHELEYSLFQEIRERVAGEGSRIACSASGLATLDVLISLAGVADERGYCKPLVDDSQVIDIHDGRHPVIEAMKLGERFVPNDTLLDGGESQILMITGPNMAGKSTYMRQVALITLMAQAGSFVPAASARIGIADRIFTRVGAGDNLSRGQSTFMLEMMEAAGILRNATPKSLIVMDEIGRGTSTFDGVSIAWAVAEYIHDTPTCRSRTLFATHYHELTELAATRERIRNFTVAVREWNDQVIFLRTIVPGGASHSYGIQVARLAGMPADVIERAKEILRNLENGEFEEGAPRIAKSRRQRTPDPSPQFSLFESDEDLLRTRLKKLNIATLTPLEALNLLDELKRMA.

Residue 621–628 (GPNMAGKS) participates in ATP binding. Positions 813-834 (GAPRIAKSRRQRTPDPSPQFSL) are disordered.

Belongs to the DNA mismatch repair MutS family.

Its function is as follows. This protein is involved in the repair of mismatches in DNA. It is possible that it carries out the mismatch recognition step. This protein has a weak ATPase activity. The sequence is that of DNA mismatch repair protein MutS from Pelobacter propionicus (strain DSM 2379 / NBRC 103807 / OttBd1).